A 936-amino-acid polypeptide reads, in one-letter code: Isoleucine--tRNA ligase (936 aa).

The 'HIGH' region signature appears at 58–68 (PYANGNIHIGH). Position 560 (Glu560) interacts with L-isoleucyl-5'-AMP. Residues 601-605 (KMSKS) carry the 'KMSKS' region motif. Residue Lys604 participates in ATP binding. Positions 899, 902, 919, and 922 each coordinate Zn(2+).

It belongs to the class-I aminoacyl-tRNA synthetase family. IleS type 1 subfamily. As to quaternary structure, monomer. The cofactor is Zn(2+).

Its subcellular location is the cytoplasm. It catalyses the reaction tRNA(Ile) + L-isoleucine + ATP = L-isoleucyl-tRNA(Ile) + AMP + diphosphate. Functionally, catalyzes the attachment of isoleucine to tRNA(Ile). As IleRS can inadvertently accommodate and process structurally similar amino acids such as valine, to avoid such errors it has two additional distinct tRNA(Ile)-dependent editing activities. One activity is designated as 'pretransfer' editing and involves the hydrolysis of activated Val-AMP. The other activity is designated 'posttransfer' editing and involves deacylation of mischarged Val-tRNA(Ile). In Proteus mirabilis (strain HI4320), this protein is Isoleucine--tRNA ligase.